The sequence spans 601 residues: Beta-phellandrene synthase (601 aa).

Residues 1-35 (MSTISIHHVGILRNPLPSKNKRALINNPWSLSLPR) constitute a chloroplast transit peptide. Positions 356 and 360 each coordinate Mn(2+). Residues 356–360 (DDVYD) carry the DDXXD motif motif. Homodimerization regions lie at residues 362–368 (YGTLDEL) and 434–471 (EAEW…LSIP). Residues D499 and E507 each coordinate Mn(2+).

It belongs to the terpene synthase family. In terms of assembly, homodimer. The cofactor is Mn(2+). Mg(2+) is required as a cofactor. In terms of tissue distribution, expressed in peltate glandular trichomes. Present at low levels in flowers and stems.

The protein localises to the plastid. It is found in the chloroplast. The enzyme catalyses (2E)-geranyl diphosphate = beta-phellandrene + diphosphate. It catalyses the reaction (2E)-geranyl diphosphate = (1R,5R)-sabinene + diphosphate. It participates in secondary metabolite biosynthesis; terpenoid biosynthesis. Its function is as follows. Involved in the biosynthesis of phenolic monoterpenes natural products. Monoterpene synthase that catalyzes mainly the formation of olefins such as sabinene and beta-phellandrene, and minor amounts of other monoterpenes (e.g. myrcene, gamma-terpinene, alpha-thujene and alpha-pinene) from geranyl diphosphate (GPP). The polypeptide is Beta-phellandrene synthase (Origanum vulgare (Wild marjoram)).